A 166-amino-acid polypeptide reads, in one-letter code: Ribonuclease H2 subunit C (166 aa).

Met-1 is modified (N-acetylmethionine).

It belongs to the RNase H2 subunit C family. In terms of assembly, the RNase H2 complex is a heterotrimer composed of the catalytic subunit RNASEH2A and the non-catalytic subunits RNASEH2B and RNASEH2C.

It is found in the nucleus. Functionally, non catalytic subunit of RNase H2, an endonuclease that specifically degrades the RNA of RNA:DNA hybrids. Participates in DNA replication, possibly by mediating the removal of lagging-strand Okazaki fragment RNA primers during DNA replication. Mediates the excision of single ribonucleotides from DNA:RNA duplexes. This is Ribonuclease H2 subunit C (Rnaseh2c) from Mus musculus (Mouse).